The following is a 513-amino-acid chain: GMP synthase [glutamine-hydrolyzing] (513 aa).

The Glutamine amidotransferase type-1 domain maps to 9–198; that stretch reads MILVLDFGSQ…VRRICDCTGE (190 aa). Cysteine 86 (nucleophile) is an active-site residue. Residues histidine 172 and glutamate 174 contribute to the active site. The 190-residue stretch at 199 to 388 folds into the GMPS ATP-PPase domain; it reads WTMENFIDLE…LGIPEHLVWR (190 aa). 226–232 is a binding site for ATP; it reads SGGVDSS.

As to quaternary structure, homodimer.

The enzyme catalyses XMP + L-glutamine + ATP + H2O = GMP + L-glutamate + AMP + diphosphate + 2 H(+). It functions in the pathway purine metabolism; GMP biosynthesis; GMP from XMP (L-Gln route): step 1/1. In terms of biological role, catalyzes the synthesis of GMP from XMP. The sequence is that of GMP synthase [glutamine-hydrolyzing] from Staphylococcus carnosus (strain TM300).